Consider the following 901-residue polypeptide: Probable inorganic carbon transporter subunit DabA (901 aa).

Zn(2+) is bound by residues Cys424, Asp426, His606, and Cys621.

It belongs to the inorganic carbon transporter (TC 9.A.2) DabA family. As to quaternary structure, forms a complex with DabB. It depends on Zn(2+) as a cofactor.

It is found in the cell membrane. Functionally, part of an energy-coupled inorganic carbon pump. In Staphylococcus aureus (strain bovine RF122 / ET3-1), this protein is Probable inorganic carbon transporter subunit DabA.